Here is a 158-residue protein sequence, read N- to C-terminus: MFRIGQGYDVHQLVEGRPLILGGVDIPHDKGLLGHSDADALLHAITDALLGAAALGDIGRHFPDTAAEFKGADSRALLREAAARVRAAGWRPVNVDSTLIAQRPKLAPHIDAMRANIAADLGLDVGAVNVKGKTNEKLGYLGRCEAIEAQAVCLLAQA.

Positions 9 and 11 each coordinate a divalent metal cation. Residues 9 to 11 (DVH) and 35 to 36 (HS) contribute to the 4-CDP-2-C-methyl-D-erythritol 2-phosphate site. His-43 is a binding site for a divalent metal cation. Residues 57 to 59 (DIG) and Arg-143 contribute to the 4-CDP-2-C-methyl-D-erythritol 2-phosphate site.

This sequence belongs to the IspF family. As to quaternary structure, homotrimer. It depends on a divalent metal cation as a cofactor.

It catalyses the reaction 4-CDP-2-C-methyl-D-erythritol 2-phosphate = 2-C-methyl-D-erythritol 2,4-cyclic diphosphate + CMP. It functions in the pathway isoprenoid biosynthesis; isopentenyl diphosphate biosynthesis via DXP pathway; isopentenyl diphosphate from 1-deoxy-D-xylulose 5-phosphate: step 4/6. Functionally, involved in the biosynthesis of isopentenyl diphosphate (IPP) and dimethylallyl diphosphate (DMAPP), two major building blocks of isoprenoid compounds. Catalyzes the conversion of 4-diphosphocytidyl-2-C-methyl-D-erythritol 2-phosphate (CDP-ME2P) to 2-C-methyl-D-erythritol 2,4-cyclodiphosphate (ME-CPP) with a corresponding release of cytidine 5-monophosphate (CMP). This Chromobacterium violaceum (strain ATCC 12472 / DSM 30191 / JCM 1249 / CCUG 213 / NBRC 12614 / NCIMB 9131 / NCTC 9757 / MK) protein is 2-C-methyl-D-erythritol 2,4-cyclodiphosphate synthase.